Here is a 40-residue protein sequence, read N- to C-terminus: uncharacterized protein (40 aa).

A helical transmembrane segment spans residues Thr-20–Ile-37.

It is found in the membrane. This is an uncharacterized protein from Archaeoglobus fulgidus (strain ATCC 49558 / DSM 4304 / JCM 9628 / NBRC 100126 / VC-16).